The sequence spans 285 residues: Transcription factor MYB15 (285 aa).

HTH myb-type domains are found at residues 9–61 (KMGL…MNYL) and 62–116 (KPDI…KKRL). DNA-binding regions (H-T-H motif) lie at residues 37–61 (WRAL…MNYL) and 89–112 (WSAI…HTHL). Residues 115-172 (RLEDYQPAKPKTSNKKKGTKPKSESVITSSNSTRSESELADSSNPSGESLFSTSPSTS) form a disordered region. Residues 139-158 (SVITSSNSTRSESELADSSN) are compositionally biased toward polar residues. Over residues 159 to 172 (PSGESLFSTSPSTS) the composition is skewed to low complexity.

In terms of assembly, interacts with SCRM/ICE1. In terms of tissue distribution, expressed in roots, leaves, stems and flowers. Expressed in stomatal guard cells.

Its subcellular location is the nucleus. Its function is as follows. Transcription factor involved in cold-regulation of CBF genes and in the development of freezing tolerance. May be part of a complex network of transcription factors controlling the expression of CBF genes and other genes in response to cold stress. Binds to the MYB recognition sequences in the promoters of CBF1, CBF2 and CBF3 genes. Involved in drought and salt tolerance. May enhance expression levels of genes involved in abscisic acid (ABA) biosynthesis and signaling, as well as those encoding stress-protective proteins. The protein is Transcription factor MYB15 of Arabidopsis thaliana (Mouse-ear cress).